The sequence spans 53 residues: Natriuretic peptide DNP-2 (53 aa).

The cysteines at positions 7 and 23 are disulfide-linked. Positions 39 to 53 (IIRDLHPDSKQSQAA) are excised as a propeptide.

This sequence belongs to the natriuretic peptide family. As to expression, expressed by the venom gland.

The protein resides in the secreted. In terms of biological role, exhibits vasodilator, natriuretic and diuretic properties in animal models and human tissues. Acts by stimulating cGMP via the natriuretic peptide receptor 1 (NPR1). Is a poor agonist of the atrial natriuretic peptide receptor 2 (NPR2). Is not degraded by neutral endopeptidase (NEP/MME). Binds to atrial natriuretic peptide clearance receptor (NPR-C/NPR3), which may be responsible of the removal of DNP from the circulation. Increases calcium uptake and induces histamine release from rat peritoneal mast cells. Increases calcium-activated potassium (KCa) current in gastric antral circular smooth muscle cells by increasing cGMP production and activating inositol trisphosphate receptors (IP3Rs). In vivo, reduces both systolic and diastolic blood pressure with no effect on heart rate, when intravenously injected in conscious rabbits. The protein is Natriuretic peptide DNP-2 of Dendroaspis angusticeps (Eastern green mamba).